A 231-amino-acid polypeptide reads, in one-letter code: 5'-methylthioadenosine/S-adenosylhomocysteine nucleosidase (231 aa).

Catalysis depends on Glu12, which acts as the Proton acceptor. Residues Gly78, Met153, and 174-175 contribute to the substrate site; that span reads ME. Residue Asp198 is the Proton donor of the active site.

This sequence belongs to the PNP/UDP phosphorylase family. MtnN subfamily.

The catalysed reaction is S-adenosyl-L-homocysteine + H2O = S-(5-deoxy-D-ribos-5-yl)-L-homocysteine + adenine. It carries out the reaction S-methyl-5'-thioadenosine + H2O = 5-(methylsulfanyl)-D-ribose + adenine. The enzyme catalyses 5'-deoxyadenosine + H2O = 5-deoxy-D-ribose + adenine. Its pathway is amino-acid biosynthesis; L-methionine biosynthesis via salvage pathway; S-methyl-5-thio-alpha-D-ribose 1-phosphate from S-methyl-5'-thioadenosine (hydrolase route): step 1/2. Catalyzes the irreversible cleavage of the glycosidic bond in both 5'-methylthioadenosine (MTA) and S-adenosylhomocysteine (SAH/AdoHcy) to adenine and the corresponding thioribose, 5'-methylthioribose and S-ribosylhomocysteine, respectively. Also cleaves 5'-deoxyadenosine, a toxic by-product of radical S-adenosylmethionine (SAM) enzymes, into 5-deoxyribose and adenine. This chain is 5'-methylthioadenosine/S-adenosylhomocysteine nucleosidase, found in Bacillus cereus (strain G9842).